The primary structure comprises 593 residues: Double-stranded RNA-binding protein 2 (593 aa).

2 DRBM domains span residues 1–70 (MYKN…ELSK) and 87–155 (IYKN…ELKQ). Polar residues predominate over residues 188 to 197 (LNQTNGGKTP). Disordered regions lie at residues 188–221 (LNQTNGGKTPQQKEKQQSSNRPSSRRPSYPKSNA), 357–408 (APDF…ESNQ), and 546–593 (VNSS…KLHI). A compositionally biased stretch (low complexity) spans 205–219 (SSNRPSSRRPSYPKS). Positions 378-408 (ESSPASEQESKSHTASSSATRSPSQQLESNQ) are enriched in polar residues. Residues 572-586 (RTNTSDTSNAATASS) show a composition bias toward low complexity.

Binds double-stranded RNA. The sequence is that of Double-stranded RNA-binding protein 2 (DRB2) from Oryza sativa subsp. japonica (Rice).